A 394-amino-acid chain; its full sequence is Phosphoglycerate kinase (394 aa).

Residues 21–23 (DFN), Arg-36, 59–62 (HLGR), Arg-118, and Arg-151 each bind substrate. A Phosphoserine modification is found at Ser-183. Lys-201 contacts ATP. At Thr-299 the chain carries Phosphothreonine. Residues Glu-323 and 350–353 (GGDS) each bind ATP.

This sequence belongs to the phosphoglycerate kinase family. In terms of assembly, monomer.

Its subcellular location is the cytoplasm. The catalysed reaction is (2R)-3-phosphoglycerate + ATP = (2R)-3-phospho-glyceroyl phosphate + ADP. It functions in the pathway carbohydrate degradation; glycolysis; pyruvate from D-glyceraldehyde 3-phosphate: step 2/5. This is Phosphoglycerate kinase from Halalkalibacterium halodurans (strain ATCC BAA-125 / DSM 18197 / FERM 7344 / JCM 9153 / C-125) (Bacillus halodurans).